A 335-amino-acid chain; its full sequence is Probable pectinesterase 29 (335 aa).

The first 24 residues, 1 to 24, serve as a signal peptide directing secretion; the sequence is MGTHRIFIGLIALCCFCLPHLIEA. Asparagine 43 carries an N-linked (GlcNAc...) asparagine glycan. The Proton donor role is filled by aspartate 166. The active-site Nucleophile is aspartate 187. Substrate-binding residues include arginine 248 and tryptophan 250. Asparagine 262 is a glycosylation site (N-linked (GlcNAc...) asparagine).

The protein belongs to the pectinesterase family. Expressed in flower buds.

The protein resides in the secreted. The protein localises to the cell wall. It carries out the reaction [(1-&gt;4)-alpha-D-galacturonosyl methyl ester](n) + n H2O = [(1-&gt;4)-alpha-D-galacturonosyl](n) + n methanol + n H(+). The protein operates within glycan metabolism; pectin degradation; 2-dehydro-3-deoxy-D-gluconate from pectin: step 1/5. In terms of biological role, acts in the modification of cell walls via demethylesterification of cell wall pectin. This Arabidopsis thaliana (Mouse-ear cress) protein is Probable pectinesterase 29 (PME29).